The sequence spans 910 residues: Adhesion G-protein coupled receptor F1 (910 aa).

A signal peptide spans M1–G19. Residues G20–P583 lie on the Extracellular side of the membrane. 17 N-linked (GlcNAc...) asparagine glycosylation sites follow: N139, N168, N205, N282, N310, N317, N329, N354, N368, N389, N410, N423, N437, N455, N512, N528, and N553. Positions E148–Q256 constitute an SEA domain. 2 disulfides stabilise this stretch: C257–C287 and C275–C299. Residues N437–S579 form the GAIN-B domain. 2 disulfide bridges follow: C534-C561 and C549-C563. Residues C534 to S579 form a GPS region. The tract at residues S568 to F576 is stachel. Residues V584 to L609 form a helical membrane-spanning segment. Residues F610–H621 lie on the Cytoplasmic side of the membrane. The chain crosses the membrane as a helical span at residues T622–T646. Over V647 to T658 the chain is Extracellular. C657 and C733 form a disulfide bridge. The helical transmembrane segment at A659 to Y684 threads the bilayer. Over R685–H696 the chain is Cytoplasmic. The helical transmembrane segment at L697–A719 threads the bilayer. Over V720–K742 the chain is Extracellular. N-linked (GlcNAc...) asparagine glycosylation is found at N736 and N739. Residues P743–T767 traverse the membrane as a helical segment. Residues K768–A784 lie on the Cytoplasmic side of the membrane. A helical membrane pass occupies residues T785 to D813. Topologically, residues S814–N816 are extracellular. Residues L817–D842 form a helical membrane-spanning segment. The Cytoplasmic portion of the chain corresponds to S843–E910.

It belongs to the G-protein coupled receptor 2 family. Adhesion G-protein coupled receptor (ADGR) subfamily. As to quaternary structure, heterodimer of 2 chains generated by proteolytic processing; the large extracellular N-terminal fragment and the membrane-bound C-terminal fragment predominantly remain associated and non-covalently linked. Post-translationally, autoproteolytically processed at the GPS region of the GAIN-B domain; this cleavage modulates receptor activity. In terms of processing, glycosylated. Glycosylation at Asn-389 is required for secretion or folding. As to expression, mainly expressed in the kidney. Up-regulated in lung adenocarcinomas and prostate cancers.

The protein resides in the cell membrane. The protein localises to the secreted. Forms a heterodimer of 2 chains generated by proteolytic processing that remain associated through non-covalent interactions mediated by the GAIN-B domain. In the inactivated receptor, the Stachel sequence (also named stalk) is embedded in the GAIN-B domain, where it adopts a beta-strand conformation. On activation, the Stachel moves into the 7 transmembrane region and adopts a twisted hook-shaped configuration that forms contacts within the receptor, leading to coupling of a G-alpha protein, which activates signaling. The cleaved GAIN-B and N-terminal domains can then dissociate from the rest of the receptor. In terms of biological role, adhesion G-protein coupled receptor (aGPCR) for N-docosahexaenoylethanolamine (synaptamide), an omega-3 fatty acid lipid highly enriched in the brain. Ligand binding causes a conformation change that triggers signaling via guanine nucleotide-binding proteins (G proteins) and modulates the activity of downstream effectors, such as adenylate cyclase. ADGRF1 is coupled to G(s) G proteins and mediates activation of adenylate cyclase activity. Also able to couple to G(q), G(i) and G(12)/G(13) G proteins; additional evidence is however required to confirm this result in vivo. Involved in the development of neurons and cognitive function. In liver, involved in fat accumulation. The sequence is that of Adhesion G-protein coupled receptor F1 from Homo sapiens (Human).